Here is a 474-residue protein sequence, read N- to C-terminus: Mitochondrial import inner membrane translocase subunit TIM44-1 (474 aa).

A mitochondrion-targeting transit peptide spans 1–54 (MAIRKIIRDLLITKQPLLRQLFHQRVLRANARSEFLPAIGYTSHRRFSVFTEFS). A coiled-coil region spans residues 68 to 88 (ERTVKELKERTEEFKGVTEDL). Positions 132 to 143 (VKESFKLGKEEN) are enriched in basic and acidic residues. The interval 132-165 (VKESFKLGKEENAESASSSGTRASQGEKQQSGST) is disordered. Residues 145-165 (ESASSSGTRASQGEKQQSGST) show a composition bias toward polar residues.

This sequence belongs to the Tim44 family. As to quaternary structure, probable component of the PAM complex at least composed of a mitochondrial HSP70 protein, TIMM44 and TIMM14. The complex interacts with the TIMM23 component of the TIM17:23 complex. As to expression, expressed in roots, flowers, young cotyledons and leaves.

Its subcellular location is the mitochondrion inner membrane. In terms of biological role, essential component of the PAM complex, a complex required for the translocation of transit peptide-containing proteins from the inner membrane into the mitochondrial matrix in an ATP-dependent manner. Recruits mitochondrial HSP70 to drive protein translocation into the matrix using ATP as an energy source. This is Mitochondrial import inner membrane translocase subunit TIM44-1 (TIM44-1) from Arabidopsis thaliana (Mouse-ear cress).